The primary structure comprises 162 residues: Ribosome maturation factor RimP (162 aa).

It belongs to the RimP family.

It localises to the cytoplasm. In terms of biological role, required for maturation of 30S ribosomal subunits. This Leptospira interrogans serogroup Icterohaemorrhagiae serovar copenhageni (strain Fiocruz L1-130) protein is Ribosome maturation factor RimP.